The primary structure comprises 367 residues: Endophilin-A2 (367 aa).

The segment at 1–21 (MSVAGLKKQFYKASQLVSEKV) is membrane-binding amphipathic helix. The region spanning 18–249 (SEKVGGAEGT…LKRRMREASS (232 aa)) is the BAR domain. Residues 60–87 (PNPASRAKLTMLNTMSKIRGQVKNPGYP) are required for dimerization upon membrane association. Positions 181–250 (EELRQAMEKF…KRRMREASSR (70 aa)) form a coiled coil. Positions 218–254 (LVDAQLDYHRQAVQILDELAEKLKRRMREASSRPRRE) are interaction with ARC. Residues 243-293 (RMREASSRPRREYKPKPRETYDFGESDQSNGGFSCTPTPKVSASSSFRSDK) form a disordered region. Positions 245-263 (REASSRPRREYKPKPRETY) are enriched in basic and acidic residues. Polar residues predominate over residues 268 to 289 (SDQSNGGFSCTPTPKVSASSSF). Residues 305-364 (LDQPCCKALYDFEPENDGELGFKEGDIITLTNQIDENWYEGMINGQSGFFPLNYVEVLVP) form the SH3 domain.

The protein belongs to the endophilin family. As to quaternary structure, interacts with ARC. Interacts with SYNJ1 and DNM1. In terms of tissue distribution, highest level in central region of the theca of developing follicles (at protein level). Expressed at highest level in brain and testis, at high level in kidney, lung and stroma, low level in spleen and adrenal gland (at protein level). Expressed in most tissue with highest levels in small ovarian follicles, brain and testis.

The protein localises to the cytoplasm. Its subcellular location is the early endosome membrane. The protein resides in the cell projection. It localises to the podosome. In terms of biological role, implicated in endocytosis. May recruit other proteins to membranes with high curvature. This is Endophilin-A2 from Gallus gallus (Chicken).